Consider the following 200-residue polypeptide: dTTP/UTP pyrophosphatase (200 aa).

Asp-80 functions as the Proton acceptor in the catalytic mechanism.

The protein belongs to the Maf family. YhdE subfamily. Requires a divalent metal cation as cofactor.

It localises to the cytoplasm. The enzyme catalyses dTTP + H2O = dTMP + diphosphate + H(+). It catalyses the reaction UTP + H2O = UMP + diphosphate + H(+). Nucleoside triphosphate pyrophosphatase that hydrolyzes dTTP and UTP. May have a dual role in cell division arrest and in preventing the incorporation of modified nucleotides into cellular nucleic acids. The sequence is that of dTTP/UTP pyrophosphatase from Pasteurella multocida (strain Pm70).